The chain runs to 492 residues: UDP-N-acetylmuramoyl-L-alanyl-D-glutamate--2,6-diaminopimelate ligase (492 aa).

Residue S30 coordinates UDP-N-acetyl-alpha-D-muramoyl-L-alanyl-D-glutamate. Position 114–120 (114–120) interacts with ATP; that stretch reads GTNGKTS. UDP-N-acetyl-alpha-D-muramoyl-L-alanyl-D-glutamate-binding positions include 156 to 157, S183, Q189, and R191; that span reads TT. An N6-carboxylysine modification is found at K223. Meso-2,6-diaminopimelate contacts are provided by residues R389, 413-416, G462, and E466; that span reads DNPR. The Meso-diaminopimelate recognition motif motif lies at 413–416; sequence DNPR.

It belongs to the MurCDEF family. MurE subfamily. Mg(2+) is required as a cofactor. Post-translationally, carboxylation is probably crucial for Mg(2+) binding and, consequently, for the gamma-phosphate positioning of ATP.

It localises to the cytoplasm. It catalyses the reaction UDP-N-acetyl-alpha-D-muramoyl-L-alanyl-D-glutamate + meso-2,6-diaminopimelate + ATP = UDP-N-acetyl-alpha-D-muramoyl-L-alanyl-gamma-D-glutamyl-meso-2,6-diaminopimelate + ADP + phosphate + H(+). Its pathway is cell wall biogenesis; peptidoglycan biosynthesis. Catalyzes the addition of meso-diaminopimelic acid to the nucleotide precursor UDP-N-acetylmuramoyl-L-alanyl-D-glutamate (UMAG) in the biosynthesis of bacterial cell-wall peptidoglycan. The protein is UDP-N-acetylmuramoyl-L-alanyl-D-glutamate--2,6-diaminopimelate ligase of Neisseria meningitidis serogroup A / serotype 4A (strain DSM 15465 / Z2491).